Reading from the N-terminus, the 366-residue chain is Protein BIG GRAIN 1-like B (366 aa).

Disordered stretches follow at residues 42–73 and 129–148; these read DSST…DFNR and FERS…EHGS. The segment covering 56-73 has biased composition (basic and acidic residues); the sequence is QNREDTRVSANRRDDFNR.

Belongs to the BIG GRAIN 1 (BG1) plant protein family.

The protein localises to the cell membrane. Functionally, involved in auxin transport. Regulator of the auxin signaling pathway. The chain is Protein BIG GRAIN 1-like B from Arabidopsis thaliana (Mouse-ear cress).